A 177-amino-acid polypeptide reads, in one-letter code: Ribosome maturation factor RimP (177 aa).

It belongs to the RimP family.

It localises to the cytoplasm. In terms of biological role, required for maturation of 30S ribosomal subunits. The polypeptide is Ribosome maturation factor RimP (Streptococcus sanguinis (strain SK36)).